Consider the following 236-residue polypeptide: Bacterial rhodopsin CSR3 (236 aa).

Over 1–3 (MDA) the chain is Extracellular. The helical transmembrane segment at 4–25 (VAVVYGITAAGFAVGVAIVGYL) threads the bilayer. Residues 26-34 (YASLEGSEE) lie on the Cytoplasmic side of the membrane. Residues 35–56 (RSILAALALIPGFAGISYVAMA) form a helical membrane-spanning segment. Topologically, residues 57-70 (FGIGTVTIGETTLV) are extracellular. Residues 71–92 (GFRYLDWVVTTPLLVGFVGYAA) traverse the membrane as a helical segment. At 93-95 (GAS) the chain is on the cytoplasmic side. Residues 96-118 (RRAIFGVMVADALMILTGVGAVV) traverse the membrane as a helical segment. The Extracellular segment spans residues 119–122 (ADGT). The chain crosses the membrane as a helical span at residues 123–150 (LKWVLFGVSTVFHVSLFAYLYLVFPRSV). At 151 to 153 (PDD) the chain is on the cytoplasmic side. A helical transmembrane segment spans residues 154–181 (PQRIGLFSLLKNHIGLLWIAYPLVWLAG). At 182–189 (PEGLGLAT) the chain is on the extracellular side. A helical transmembrane segment spans residues 190 to 222 (YVGVSITYAFLDLLAKVPYVYFFYARRQVFATK). Lys205 bears the N6-(retinylidene)lysine mark. At 223-236 (LLRDSGEVTATPAD) the chain is on the cytoplasmic side.

It belongs to the archaeal/bacterial/fungal opsin family.

It is found in the cell membrane. The protein is Bacterial rhodopsin CSR3 of Haloarcula vallismortis (Halobacterium vallismortis).